Reading from the N-terminus, the 1926-residue chain is Rho GTPase-activating protein 21-A (1926 aa).

The disordered stretch occupies residues 1-41 (MATRRAIVPEQQQEPSSPASEISKNKDGQEQSEMVSPMEEE). Polar residues predominate over residues 10 to 22 (EQQQEPSSPASEI). In terms of domain architecture, PDZ spans 77-162 (HTSIKDEENG…TLELSVMPKD (86 aa)). Disordered stretches follow at residues 211 to 236 (VEVP…TTQP), 353 to 378 (PTAQ…QIDW), 416 to 487 (TDYN…RSES), 571 to 592 (QPTR…DRSG), 640 to 704 (FQRK…DSDA), and 868 to 905 (GKLG…DVFS). Polar residues-rich tracts occupy residues 216 to 236 (SGTS…TTQP), 353 to 372 (PTAQ…SPGP), and 416 to 429 (TDYN…FSGQ). Positions 441–451 (QQSVQMRQRSV) are enriched in low complexity. The span at 452–466 (SQERLEDPVLMKEWP) shows a compositional bias: basic and acidic residues. Residues 468–479 (SASQDTLSSAVA) show a composition bias toward polar residues. Positions 640-669 (FQRKTQTESASGFQLDSVKTSMSASSSPPA) are enriched in polar residues. One can recognise a PH domain in the interval 906–1019 (DSNKEGFLYF…WIKAIQENGN (114 aa)). Polar residues predominate over residues 1044–1064 (MSSASNKSEQSPKAPRQTLSI). The tract at residues 1044-1107 (MSSASNKSEQ…SPPKDKGSWR (64 aa)) is disordered. A compositionally biased stretch (basic and acidic residues) spans 1083-1105 (PKQESERRLFSKDDISPPKDKGS). The Rho-GAP domain occupies 1126-1318 (VRLDDCPPAH…TLIQKHDWFF (193 aa)). Disordered regions lie at residues 1330–1381 (VHEE…SGKD), 1396–1416 (ASRK…EDEL), 1512–1540 (QMEE…PKVV), 1573–1598 (LDPN…DERS), 1626–1658 (RQHR…TPRL), and 1827–1915 (STSE…LSGT). Residues 1512-1534 (QMEESMSDSGTMLSNSSQASAQR) show a composition bias toward polar residues. 2 stretches are compositionally biased toward polar residues: residues 1639 to 1653 (VQAN…TEGS) and 1866 to 1902 (TADI…NNFS).

The protein resides in the golgi apparatus membrane. It is found in the cell junction. It localises to the cytoplasmic vesicle membrane. The protein localises to the cytoplasm. Its subcellular location is the cytoskeleton. GTPase-activating protein (GAP) for rhoa and cdc42. The sequence is that of Rho GTPase-activating protein 21-A (arhgap21-a) from Xenopus laevis (African clawed frog).